A 323-amino-acid polypeptide reads, in one-letter code: Protoheme IX farnesyltransferase (323 aa).

The next 8 helical transmembrane spans lie at 50–70, 97–117, 118–138, 150–170, 184–204, 231–248, 252–274, and 293–313; these read IVLI…ANTF, NRDA…WLWL, LCDS…YIFV, NIVW…AVIV, AIVL…ALAM, IVWY…LIPA, IYAA…LHLG, and YLAV…ETIG.

The protein belongs to the UbiA prenyltransferase family. Protoheme IX farnesyltransferase subfamily.

It is found in the cell membrane. The catalysed reaction is heme b + (2E,6E)-farnesyl diphosphate + H2O = Fe(II)-heme o + diphosphate. It participates in porphyrin-containing compound metabolism; heme O biosynthesis; heme O from protoheme: step 1/1. Its function is as follows. Converts heme B (protoheme IX) to heme O by substitution of the vinyl group on carbon 2 of heme B porphyrin ring with a hydroxyethyl farnesyl side group. The polypeptide is Protoheme IX farnesyltransferase (Corynebacterium glutamicum (strain R)).